The sequence spans 164 residues: Phosphopantetheine adenylyltransferase (164 aa).

Substrate is bound at residue serine 9. ATP contacts are provided by residues 9 to 10 (SF) and histidine 17. Residues lysine 41, valine 78, and arginine 92 each coordinate substrate. ATP contacts are provided by residues 93 to 95 (GLR), glutamate 103, and 128 to 134 (VRTITAT).

Belongs to the bacterial CoaD family. Homohexamer. It depends on Mg(2+) as a cofactor.

The protein localises to the cytoplasm. It catalyses the reaction (R)-4'-phosphopantetheine + ATP + H(+) = 3'-dephospho-CoA + diphosphate. It participates in cofactor biosynthesis; coenzyme A biosynthesis; CoA from (R)-pantothenate: step 4/5. Reversibly transfers an adenylyl group from ATP to 4'-phosphopantetheine, yielding dephospho-CoA (dPCoA) and pyrophosphate. This is Phosphopantetheine adenylyltransferase from Brucella abortus (strain 2308).